We begin with the raw amino-acid sequence, 344 residues long: Outer membrane protein A (344 aa).

Over M1–N14 the chain is Periplasmic. Residues T15–W24 traverse the membrane as a beta stranded segment. Topologically, residues S25–L49 are extracellular. A beta stranded membrane pass occupies residues G50 to V59. Residues N60–Y62 are Periplasmic-facing. Residues L63–W71 form a beta stranded membrane-spanning segment. Residues L72–Q89 are Extracellular-facing. Residues G90–P100 traverse the membrane as a beta stranded segment. The Periplasmic segment spans residues I101 to D104. The chain crosses the membrane as a beta stranded span at residues L105 to M114. Topologically, residues V115 to S139 are extracellular. The beta stranded transmembrane segment at P140–A149 threads the bilayer. The Periplasmic portion of the chain corresponds to V150–D153. Residues I154 to W162 traverse the membrane as a beta stranded segment. Topologically, residues V163–G179 are extracellular. A beta stranded transmembrane segment spans residues M180–R188. Residues F189 to A344 are Periplasmic-facing. Repeat copies occupy residues A199–P200, A201–P202, A203–P204, and A205–P206. Residues A199–P206 form a 4 X 2 AA tandem repeats of A-P region. The 129-residue stretch at V208–K336 folds into the OmpA-like domain. A disulfide bridge connects residues C309 and C321.

This sequence belongs to the outer membrane OOP (TC 1.B.6) superfamily. OmpA family. Monomer and homodimer.

The protein localises to the cell outer membrane. Functionally, with TolR probably plays a role in maintaining the position of the peptidoglycan cell wall in the periplasm. Acts as a porin with low permeability that allows slow penetration of small solutes; an internal gate slows down solute passage. Required for conjugation with F-type plasmids; probably serves as the mating receptor on recipient cells. The sequence is that of Outer membrane protein A from Klebsiella pneumoniae.